We begin with the raw amino-acid sequence, 137 residues long: Large ribosomal subunit protein uL16 (137 aa).

The protein belongs to the universal ribosomal protein uL16 family. As to quaternary structure, part of the 50S ribosomal subunit.

Functionally, binds 23S rRNA and is also seen to make contacts with the A and possibly P site tRNAs. In Mesorhizobium japonicum (strain LMG 29417 / CECT 9101 / MAFF 303099) (Mesorhizobium loti (strain MAFF 303099)), this protein is Large ribosomal subunit protein uL16.